Consider the following 4318-residue polypeptide: MPAEDARKEYLLSSCGSQLGLSASDDAITSLYSARELNTFLDDGNCSVLSAKLNSSGGNKKVYLSNKVDPSDTGEKVIAFFKLRPDVISPDNVQSSILTVSMMDSPAGALLHAVDKVFAPLLIEDEKYNRSFNPKLQSLLSELRAGLKSLVRKQDPSQGGPVKRGDNDFAGILTPSDEFQHWSEVAMSGRNQDAKERAEHFLSFFETVSREFDVLDTLSLEEAQELVETTQDAVDDVWKQGEFDPYPEKRMAHLLEVIGSAFGRFIQRKLGEFDLWLDPFHKVKQALLSGIAICEKWVSSCEKLTEQFWKRDPMHPWNGAKFTPEGLSQLSKRLQEISTLRTIHEQLIRLLSKGEQEEVRLKDVFSAFSGLNPLQYNPYTEPHWRAAVSQYERAINPAERRIAIKLRSQFRNVEGNPNQLLREFQKYKELVSRESVRKEVVSERETLLGQLQVYLKSIRDDFNVRTSESSPPTGKNLPEVVNNIVWVRQLEAKVEQTSQVADTLLNDLSGFGRFRRDAGDLLDELRNWRQDQFDSWSSEMQAAISDPNKPLSLQMTGRLMEFETKNNELIVSYSERLVTLMREVRQLQALGYPVAAKIQHTAAIAQKFYKHGVILKQVAHFHNSIAEQMIPSQRNMMLQSALAFERIIKNPRTGSKDAGQGKVQVTWENPKELEEYITKLQAAAEKLTTENRRLRKWHYTVCDKVVSLMSIDLLRQQPRWKEGLQEIRGIMASLESQGYKSQDMKSWKMHWDRQLYKALEHQYQMGLEALNENLPEIKVELTYRQQALQFRPPIEEIRAKYYREMKKFISLPYHFRGIGDTGEPLIYPAIIERNASGFLNVYKMAEVLFSKLEKAKDIFKNWVVLGSVDLDKLLETHLHTVTDWERNFKALKARGRDSEKLPSQVKVYCVTVSTAPVKGTIDDHIQRLFDSLLSSLRRSITESVTEIEKFLKDGMEALATMPQTVEEIGNANAKHAELEAKKPEMRPMFDRAEAKNKLLRTVAGGGVDQFTQLHAHWEKFELMMESHQLMIKEQVNVMKSNVESRVDAFRAELEKFSARWNHAKPSPEVIESGDKESCLRAVELVKEKKVEFDEMQKTKNSLIFDCKHFELEEPFFSIANDLEVDFDQQTTMWTLYEEFSNGLSVLETEDWIVFRSKTYQFDDFLTTWTEKLKSGGPDVEHTIMTVRLSKDIDKYKTVSPLLKYLSSDIFTQEHWMDLYRMLKMPRSKTVERMTFGDILATADHIVANADGLKDLFNRAKGEVSIREALRELDVWGVGACFSLTEYSDSTDHQLMLIKDWKDLVTQVGDNQSLLQSLKDSPYYKGFADKATIWEQRLADLDEYLQNLNQIQRKWVYLEPIFGRGALPKEQGRFRRVDDDFRSIMMDVARDNRVLSLVGRSGLRTTLTTLLDQLQRCQKALNEFLEEKRSILPRFYFIGDDDLLEILGQSQNPAVIQSHLKKLFAGIHSVEFDQGCKHITAMKSLEGEVVPLLKAVEITPEVEIWLGDLAKEMKSTLRKLLVDCLKDQQSSSSGVGVDPTKYPSQILGLAAQIQFTEQCETAIRDNSLQDLLIELEQQLEGYTSADISGAAGERNAAIHVLELKLKALILDTIHSLDVVQLLQKENVTSLDNWLWQKQLRYYLDNTKTAIMRMVDAEFQYTYEYQGNAAKLVHTPLTDKCYLTLTQGMHMGMGGNPYGPAGTGKTESVKALGGLFGRQVLVFNCDEGVDVKSMGRIFIGLVKCGAWGCFDEFNRLEEAVLSAVSMQIQTIQAALKQKKPKVDLLDRTIDIDPNSGIFITLNPAGKGYGGRQKLPDNLKHVFRPVAMSRPDNEQIAEVILFSEGFKDGKSLGRKLVAIFNLAKELLTPQQHYDWGLRALKTVLRGCGNLLQIARQQAGQDRSKVQEPKLVVQALRVNTLSKLTFSDGIRFDALVKDVFPGVELKDIEYMTLADAIRQHCKEHNLVVMETQVKKALELYEQLRQRMGVVVVGPSGSGKSTTWQILRAALNNTGQVVKQYTMNPKAMPRTQLLGHIDMDTREWSDGVLTYSARQVVREPQEIHSWIICDGDIDPEWIESLNSVLDDNRLLTMPSGERIQFGPNVNFLFETHDLSCASPATISRMGMIFMSDEDTEIKDLVQSWLSHQAEESRNRLAAWIEDHFYRALEWVMRQGDFVVDTSLVGVVMNGLSHLRGAECISDFTIKLIRGLGANLPEATRMNFAKEVFHMTREQPPDPRRILDTYFDERTGSLATYTMQDNDELSASDFNNPSSLPVIRTPDVQRCLDFFNPWLEADNRQPFILVGPDGCGKGMVLRHCFAQLRSTQIATIHCNAQTSPTHLLQKLQQMCMVLSTNTGRVYRPKDCENLVLYLKDLNLPKPDKWGTCQLLAFLQQVLTYHGFYDDKLEWVGLDGVQIVASMNAAHTVGRHPLSTRFTSIVRICSIGYADREQLQGIYSAYLRPVLHRSLGNHPVWSSPSKVSMLAGSMISIYEQVRSKFTIDDHSHYLFTPRDLTQWVLGLLRYDLGGSSESTSEHVLEVLSYEARRLFCDRLVGEEARNRFDNILNGTLQADWNAGQILQNLNGHYYVTWGARTETSSGGSLPPAGKSLGRLSASDLKEVIKKAKKTFARENRELDIQIFHEVLDHVARVDRVLTQPRGSLLLAGRSGVGRRTAASLVAHCHRTELFSPNLSRAYGLKQFKNDLKTAMQQAGVEGNQVVLLLEDHQFIQPQFLELINSLLSSGEIPGLYSPEELEPLLAPIRDQASEEGFRGTLISYYASRILTNLHVVLIMDSKNASFAVNCQSNPAFYKSCSVQWMEGWSKESMKEIPRLLLRHHKGDTKDEGSKEDRKRHRKVSGGDEIIRNFLEIHKSSSVRHSTPRRYMTFLHTYLDVYRRKKQGVEEKQKHLQAGVAKLNEAKALVAELNSKAAKQSALLAEKQKEADEALKKIQTSMEKAGEQRREIEILKQQADEENVKLEKRKRVIDEELAEIEPQVQAAKSAVGSIKSESLSEIRAMRAPPDVIRDILEGVLRLMGIFDTSWVSMKSFLAKRGVKEEISTFDARKINKDLREGTEQLLKKHASSFDPQNAKRASVAAAPLAAWVKANVKYSYALEKIEPLETEQNQLKKNLEKAVGRIEKLSKGLADVDHRVDEYKRRFQKLNEEAAKLKYELEKEQETIASAENLIGKLEGEYQRWNNQVSELNTELETLPKKAQCAAGFITYLTSSPEDERKQKLAEWSKLCGLERFDMRRFLSTESEQLTWKGEGLPSDELSVENAVMILQTNDMSIKSSLRPFLIDPSLRATEWLKTHLKEARLEVINQQDANFSTALELAVRFGKTLIIQEMDKIEPVLYPLLRADLISQGPRFVVQIGDKVIDYHEDFRLFMTTRNPNPEIPPDAASIISEINFTTTRAGLTGQLLAATIQHEKPELEVRKTELLKQEEDLKIQLAQLEESLLETLAKAEGNILENKALLESLNKTKESSQTITQSLVESVQLQESLDQERAAYLPLAENGSALFFVISDLAKLNNMYRFSLGAFLRLFSKALQGRMDGSSTEMRIQKLIKSLQMLVYEYVCQSLFKADRLMFALHLVHGMHPNHFKENEWEAFLGQIVADVRDSQQSGSMPSWVDQDRHKALASFMATFPSVGQSLSLTDNGLWGHFNRSSQCEHEFPTSLEKKISPFQQLLLIQAIRPDRLQSAMTFFAQRGLGMKELTTPTINLKRLCQDTVPSEPILIIISPGADPTQELQEVAAEVIGADHYHEVAMGQGQADIAMQLLHECSRNGEWLCLKNLHLVTAWLPVLEKEMNALSPHENFRLWLTAESHPKFPTILLQSSLKITYEAPPGIKKNLLRSYDSWTPEFIGRENNVVRAQALFALAWFHAICQERRNFIPQGWTKFYEFSMSDLRAGADIIDRLCHGKGKEVQFEFIYGLFENAIYGGRVDNPFDMRVLRSYLAQYFNKEMLGGSSARRSKKLPGGNSIPVSSYYKDFTELVSKFPDDDKPSFFGLPANIERSSQRIISVQVISQLKILRRSDEAAEKFDTEKWNTELGPILSLWKKLNQGSNLIQTKAQPPSDRSGTQGPIDSFIQLERYNALQLVQFVHSTLAALSKVIRGTSLLTSEVQALASNLLKQETPLSWQSKWEGPEDPVLYLKTIVSRTMAIQGWVEKAQRNNLLSDTLNLSELFHPDTFLNALRQQTARDSKTSMDSLKFACRWSGNISGAKYQVKIGGLHLEGCTFDGQRLSENQRDSPSVCSVPACSVAWVLKDTPNTYHASESISLPVYFTEQREKIVTHLVLPCGGEQDHWIQTGAALFLQNQ.

The tract at residues M1–Q1658 is stem. L147–Q154 contributes to the ATP binding site. Coiled-coil stretches lie at residues D1328–W1354 and L1402–L1431. AAA stretches follow at residues Y1659–G1883, D1951–D2171, A2261–G2515, and T2623–V2871. G1697–T1704 contacts ATP. Positions E1959–V1986 form a coiled coil. ATP contacts are provided by residues G1989–S1996, G2301–G2308, and G2661–R2668. Positions D2888 to I3176 are stalk. Coiled coils occupy residues V2908–E2989 and Q3423–E3480. 2 AAA regions span residues L3251 to Q3487 and M3699 to R3914.

Belongs to the dynein heavy chain family. As to quaternary structure, the cytoplasmic dynein complex 2 is probably composed by a heavy chain DYH1B homodimer and a number of light intermediate chains.

It is found in the cytoplasm. The protein resides in the cytoskeleton. The protein localises to the cilium axoneme. It localises to the cell membrane. May function as a motor for intraflagellar retrograde transport. Functions in cilia biogenesis. The chain is Cytoplasmic dynein 2 heavy chain 1 (DYH1B) from Tripneustes gratilla (Hawaian sea urchin).